The chain runs to 597 residues: Aspartate--tRNA(Asp/Asn) ligase (597 aa).

An L-aspartate-binding site is contributed by E172. An aspartate region spans residues Q196 to K199. R218 lines the L-aspartate pocket. ATP-binding positions include R218–E220 and Q227. Residue H454 participates in L-aspartate binding. E488 is a binding site for ATP. Residue R495 participates in L-aspartate binding. G540 to R543 contributes to the ATP binding site.

Belongs to the class-II aminoacyl-tRNA synthetase family. Type 1 subfamily. In terms of assembly, homodimer.

It is found in the cytoplasm. It carries out the reaction tRNA(Asx) + L-aspartate + ATP = L-aspartyl-tRNA(Asx) + AMP + diphosphate. Aspartyl-tRNA synthetase with relaxed tRNA specificity since it is able to aspartylate not only its cognate tRNA(Asp) but also tRNA(Asn). Reaction proceeds in two steps: L-aspartate is first activated by ATP to form Asp-AMP and then transferred to the acceptor end of tRNA(Asp/Asn). This Chromobacterium violaceum (strain ATCC 12472 / DSM 30191 / JCM 1249 / CCUG 213 / NBRC 12614 / NCIMB 9131 / NCTC 9757 / MK) protein is Aspartate--tRNA(Asp/Asn) ligase.